Here is a 34-residue protein sequence, read N- to C-terminus: DDIT3 upstream open reading frame protein (34 aa).

As to quaternary structure, interacts with DDIT3 (isoform 1).

It is found in the nucleus. It localises to the cytoplasm. Its function is as follows. Product of the upstream open reading frame (uORF) of DDIT3/CHOP that is specifically produced in absence of stress, thereby preventing translation of downstream stress effector DDIT3/CHOP. The polypeptide is DDIT3 upstream open reading frame protein (Mus musculus (Mouse)).